The primary structure comprises 529 residues: Type I restriction enzyme EcoKI methylase subunit (529 aa).

S-adenosyl-L-methionine is bound by residues 148-153, 178-180, and E216; these read QYFTPR and TAG.

It belongs to the N(4)/N(6)-methyltransferase family. The type I restriction/modification system is composed of three polypeptides R, M and S. The restriction enzyme has stoichiometry R(2)M(2)S(1). The methyltransferase is composed of M(2)S(1). As to quaternary structure, (Microbial infection) Interacts with Escherichia phage T7 protein Ocr; this interaction leads to the inhibition of the methyltransferase restriction enzyme M.EcoKI composed of M(2)S(1).

It carries out the reaction a 2'-deoxyadenosine in DNA + S-adenosyl-L-methionine = an N(6)-methyl-2'-deoxyadenosine in DNA + S-adenosyl-L-homocysteine + H(+). The subtype gamma methyltransferase (M) subunit of a type I restriction enzyme. The M and S subunits together form a methyltransferase (MTase) that methylates A-2 on the top and A-3 on the bottom strand of the sequence 5'-AACN(6)GTGC-3'. In the presence of the R subunit the complex can also act as an endonuclease, binding to the same target sequence but cutting the DNA some distance from this site. Whether the DNA is cut or modified depends on the methylation state of the target sequence. When the target site is unmodified, the DNA is cut. When the target site is hemimethylated, the complex acts as a maintenance MTase modifying the DNA so that both strands become methylated. After locating a non-methylated recognition site, the enzyme complex serves as a molecular motor that translocates DNA in an ATP-dependent manner until a collision occurs that triggers cleavage. This chain is Type I restriction enzyme EcoKI methylase subunit, found in Escherichia coli (strain K12).